A 350-amino-acid chain; its full sequence is Deoxyhypusine synthase-like protein (350 aa).

It belongs to the deoxyhypusine synthase family.

The polypeptide is Deoxyhypusine synthase-like protein (Chlorobaculum tepidum (strain ATCC 49652 / DSM 12025 / NBRC 103806 / TLS) (Chlorobium tepidum)).